The primary structure comprises 349 residues: Polyamine aminopropyltransferase 2 (349 aa).

A PABS domain is found at 29-267; that stretch reads DGAITAIEDS…SSWGFLLASD (239 aa). Q60 contributes to the S-methyl-5'-thioadenosine binding site. Residues H91 and E115 each contribute to the spermidine site. Residues D135 and 167–168 contribute to the S-methyl-5'-thioadenosine site; that span reads DG. The active-site Proton acceptor is D185. P194 is an S-methyl-5'-thioadenosine binding site.

The protein belongs to the spermidine/spermine synthase family. As to quaternary structure, homodimer or homotetramer.

It is found in the cytoplasm. It catalyses the reaction S-adenosyl 3-(methylsulfanyl)propylamine + putrescine = S-methyl-5'-thioadenosine + spermidine + H(+). The protein operates within amine and polyamine biosynthesis; spermidine biosynthesis; spermidine from putrescine: step 1/1. Functionally, catalyzes the irreversible transfer of a propylamine group from the amino donor S-adenosylmethioninamine (decarboxy-AdoMet) to putrescine (1,4-diaminobutane) to yield spermidine. The sequence is that of Polyamine aminopropyltransferase 2 from Pseudomonas aeruginosa (strain ATCC 15692 / DSM 22644 / CIP 104116 / JCM 14847 / LMG 12228 / 1C / PRS 101 / PAO1).